We begin with the raw amino-acid sequence, 324 residues long: MSVKLACYVTASVTVATLMVCFMTMSTIYSEVDGFREKLDTEMNVFRQSTNGLWKDIVVIGRSSKRVRRQYEETNATPTPHADGSPSAPPGQPPAVPPVFNQPKTPNGANGNGPTCNCNADNKCPAGPSGPKGVPGVPGLDGVPGLDGVPGVGADDIAPQRESVGCFTCPQGPVGPPGALGRPGPRGLPGPRGQNGNPGRDGQPGHPGEQGSSGQIGKIGEPGPPGEKGRDAEHPIGRPGPKGPRGDQGPTGPAGQNGLHGPPGEPGTVGPEGPSGKQGRQGPDGTQGETGPDGRPGKDAEYCQCPDKSPPSEAVNANRGYRNI.

2 disordered regions span residues 68-108 (RRQY…TPNG) and 129-324 (SGPK…YRNI). Residues 87–97 (SAPPGQPPAVP) are compositionally biased toward pro residues. Triple-helical region regions lie at residues 127–153 (GPSG…PGVG), 171–231 (QGPV…KGRD), and 237–299 (GRPG…PGKD). Low complexity-rich tracts occupy residues 129-156 (SGPK…GADD) and 177-201 (PGAL…PGRD). The span at 227-236 (EKGRDAEHPI) shows a compositional bias: basic and acidic residues.

This sequence belongs to the cuticular collagen family. Collagen polypeptide chains are complexed within the cuticle by disulfide bonds and other types of covalent cross-links.

In terms of biological role, nematode cuticles are composed largely of collagen-like proteins. The cuticle functions both as an exoskeleton and as a barrier to protect the worm from its environment. This is a collagen critical for organismal morphogenesis. Mutations in sqt-1 can lengthen, shorten, or helically twist the entire animal. In Caenorhabditis elegans, this protein is Cuticle collagen sqt-1 (sqt-1).